Reading from the N-terminus, the 128-residue chain is Holo-[acyl-carrier-protein] synthase (128 aa).

Residues D8 and E59 each contribute to the Mg(2+) site.

It belongs to the P-Pant transferase superfamily. AcpS family. It depends on Mg(2+) as a cofactor.

It localises to the cytoplasm. It carries out the reaction apo-[ACP] + CoA = holo-[ACP] + adenosine 3',5'-bisphosphate + H(+). Transfers the 4'-phosphopantetheine moiety from coenzyme A to a Ser of acyl-carrier-protein. In Rickettsia typhi (strain ATCC VR-144 / Wilmington), this protein is Holo-[acyl-carrier-protein] synthase.